Reading from the N-terminus, the 597-residue chain is Elongation factor 4 (597 aa).

The tr-type G domain occupies 2–184; sequence KHIRNFSIIA…NIVSAIPAPE (183 aa). GTP contacts are provided by residues 14–19 and 131–134; these read DHGKST and NKID.

Belongs to the TRAFAC class translation factor GTPase superfamily. Classic translation factor GTPase family. LepA subfamily.

Its subcellular location is the cell inner membrane. The enzyme catalyses GTP + H2O = GDP + phosphate + H(+). Functionally, required for accurate and efficient protein synthesis under certain stress conditions. May act as a fidelity factor of the translation reaction, by catalyzing a one-codon backward translocation of tRNAs on improperly translocated ribosomes. Back-translocation proceeds from a post-translocation (POST) complex to a pre-translocation (PRE) complex, thus giving elongation factor G a second chance to translocate the tRNAs correctly. Binds to ribosomes in a GTP-dependent manner. The polypeptide is Elongation factor 4 (Vibrio campbellii (strain ATCC BAA-1116)).